Reading from the N-terminus, the 496-residue chain is MSLLITSPATVAAAATHLAGIGSALSTANAAAAAPTTALSVAGADEVSVLIAALFEAYAQEYQALSAQALAFHDQFVQALNMGAVCYAAAETANATPLQALQTVQQNVLTVVNAPTQALLGRPIIGNGANGLPNTGQDGGPGGLLFGNGGNGGSGGVDQAGGNGGAAGLIGNGGSGGVGGPGIAGSAGGAGGAGGLLFGNGGPGGAGGIGTTGDGGPGGAGGNAIGLFGSGGTGGMGGVGGMGGVGNGGNAGNGGTAGLFGHGGAGGAGGIGSADGGLGGGGGNGRFMGNGGVGGAGGYGASGDGGNAGNGGLGGVFGDGGAGGTGGLGDVNGGLAGIGGNAGFVRNGGAGGNGQLGSGAVSSAGGMGGNGGLVFGNGGPGGLGGPGTSAGNGGMGGNAVGLFGQGGAGGAGGSGFGAGIPGGRGGDGGSGGLIGDGGTGGGAGAGDAAASAGGNGGNARLIGNGGDGGPGMFGGPGGAGGSGGTIFGFAGTPGPS.

The 91-residue stretch at 4 to 94 (LITSPATVAA…VCYAAAETAN (91 aa)) folds into the PE domain. Residues 461 to 480 (LIGNGGDGGPGMFGGPGGAG) form a disordered region.

This sequence belongs to the mycobacterial PE family. PGRS subfamily.

It localises to the secreted. The protein localises to the cell wall. Its subcellular location is the host mitochondrion. When expressed in host mitochondria, induces mitochondrial stress which results in mitochondrial membrane depolarization, up-regulation of mitochondrial superoxides and release of cytochrome-C in the cytoplasm. The cytochrome-C in cytoplasm triggers the activation of caspase-9, caspase-3 and caspase-7, leading to the apoptosis of host macrophages. Being a late expressing protein, apoptosis induction by PE_PGRS1 may facilitate the M.tuberculosis survival and silent expansion of its niche at the site of granuloma. Its function is as follows. When expressed in THP-1 macrophages, promotes the survival of mycobacteria within macrophages after a 24- to 48-hour infection by blocking endoplasmic reticulum stress and inhibiting host cell apoptosis. Can chelate excessive intracellular calcium in THP-1 macrophages, which reduces the concentration of intracellular free Ca(2+) and blocks the PERK-eIF2alpha-ATF4 axis, thereby inhibiting the endoplasmic reticulum stress caused by infection. It also reduces the apoptosis of THP-1 macrophages by decreasing the activation of caspase-3 and caspase-9. In Mycobacterium tuberculosis (strain ATCC 25618 / H37Rv), this protein is PE-PGRS family protein PE_PGRS1.